A 66-amino-acid polypeptide reads, in one-letter code: MPKMKTHRGAAKRFKKTGSGKLKYDRAYGSHLFANKSTKQKRHLRKANIVSSGDFKRIKSLLVYMK.

It belongs to the bacterial ribosomal protein bL35 family.

This chain is Large ribosomal subunit protein bL35, found in Lysinibacillus sphaericus (strain C3-41).